The primary structure comprises 447 residues: Glucose-6-phosphate isomerase (447 aa).

Residue E288 is the Proton donor of the active site. Active-site residues include H309 and K423.

It belongs to the GPI family.

It localises to the cytoplasm. It catalyses the reaction alpha-D-glucose 6-phosphate = beta-D-fructose 6-phosphate. The protein operates within carbohydrate biosynthesis; gluconeogenesis. It functions in the pathway carbohydrate degradation; glycolysis; D-glyceraldehyde 3-phosphate and glycerone phosphate from D-glucose: step 2/4. In terms of biological role, catalyzes the reversible isomerization of glucose-6-phosphate to fructose-6-phosphate. The protein is Glucose-6-phosphate isomerase of Lactobacillus johnsonii (strain CNCM I-12250 / La1 / NCC 533).